The sequence spans 420 residues: Adenylosuccinate synthetase (420 aa).

Residues 12–18 and 40–42 contribute to the GTP site; these read GDEGKGK and GHT. Residue Asp-13 is the Proton acceptor of the active site. Asp-13 and Gly-40 together coordinate Mg(2+). IMP-binding positions include 13 to 16, 38 to 41, Thr-128, Arg-142, Gln-221, Thr-236, and Arg-299; these read DEGK and NAGH. Residue His-41 is the Proton donor of the active site. 295 to 301 provides a ligand contact to substrate; the sequence is ATTGRPR. GTP contacts are provided by residues Arg-301, 327–329, and 399–401; these read KAD and SYG.

Belongs to the adenylosuccinate synthetase family. As to quaternary structure, homodimer. Requires Mg(2+) as cofactor.

It localises to the cytoplasm. The enzyme catalyses IMP + L-aspartate + GTP = N(6)-(1,2-dicarboxyethyl)-AMP + GDP + phosphate + 2 H(+). It functions in the pathway purine metabolism; AMP biosynthesis via de novo pathway; AMP from IMP: step 1/2. Plays an important role in the de novo pathway of purine nucleotide biosynthesis. Catalyzes the first committed step in the biosynthesis of AMP from IMP. The protein is Adenylosuccinate synthetase of Petrotoga mobilis (strain DSM 10674 / SJ95).